A 259-amino-acid chain; its full sequence is Sugar fermentation stimulation protein homolog (259 aa).

The protein belongs to the SfsA family.

The sequence is that of Sugar fermentation stimulation protein homolog from Chloroflexus aurantiacus (strain ATCC 29364 / DSM 637 / Y-400-fl).